The primary structure comprises 442 residues: DNA topoisomerase 6 subunit A3 (442 aa).

The tract at residues 1–34 (MSEKKRRGGAGAGAASGSASKKPRVSTAASYAES) is disordered. Residues 91–224 (QDSASVTSRI…LHVVASEKGV (134 aa)) form the Topo IIA-type catalytic domain. Tyrosine 185 functions as the O-(5'-phospho-DNA)-tyrosine intermediate in the catalytic mechanism. Mg(2+)-binding residues include glutamate 271 and aspartate 323.

The protein belongs to the TOP6A family. In terms of assembly, homodimer. Heterotetramer of two TOP6A and two TOP6B subunits. Interacts with TOP6B. Mg(2+) is required as a cofactor. In terms of tissue distribution, highly expressed in flowers before pollination. Expressed in roots and shoots.

Its subcellular location is the nucleus. It carries out the reaction ATP-dependent breakage, passage and rejoining of double-stranded DNA.. Component of the DNA topoisomerase VI involved in chromatin organization and progression of endoreduplication cycles. Relaxes both positive and negative superturns and exhibits a strong decatenase activity. May be involved in cell proliferation and stress tolerance. This Oryza sativa subsp. indica (Rice) protein is DNA topoisomerase 6 subunit A3.